A 134-amino-acid chain; its full sequence is Replication enhancer protein (134 aa).

The protein belongs to the geminiviridae replication enhancer protein family. In terms of assembly, homooligomer. Interacts with the replication-associated protein (REP). Interacts with host proliferating cell nuclear antigen (PCNA). Interacts with host retinoblastoma-related protein 1 (RBR1), and may thereby deregulate the host cell cycle. Oligomerization and interaction with PCNA are necessary for optimal replication enhancement.

Increases viral DNA accumulation. Enhances infectivity and symptom expression. In Cynanchum acutum (Little mallow), this protein is Replication enhancer protein.